We begin with the raw amino-acid sequence, 460 residues long: Cysteine--tRNA ligase (460 aa).

Residue Cys28 coordinates Zn(2+). A 'HIGH' region motif is present at residues 30-40 (MTVYDYCHLGH). Positions 209, 234, and 238 each coordinate Zn(2+). Residues 266-270 (KMSKS) carry the 'KMSKS' region motif. Residue Lys269 coordinates ATP.

Belongs to the class-I aminoacyl-tRNA synthetase family. In terms of assembly, monomer. Zn(2+) is required as a cofactor.

The protein resides in the cytoplasm. The catalysed reaction is tRNA(Cys) + L-cysteine + ATP = L-cysteinyl-tRNA(Cys) + AMP + diphosphate. This chain is Cysteine--tRNA ligase, found in Pseudomonas putida (strain W619).